We begin with the raw amino-acid sequence, 315 residues long: Cysteine proteinase 1 (315 aa).

Positions 1–13 (MFTFILMFYIGYG) are cleaved as a signal peptide. The propeptide at 14 to 93 (IDFNTWVANN…KGEVRYLNIQ (80 aa)) is activation peptide. Intrachain disulfides connect Cys-115–Cys-161 and Cys-152–Cys-193. Residue Cys-118 is part of the active site. Active-site residues include His-259 and Asn-279.

It belongs to the peptidase C1 family.

The protein localises to the lysosome. Inhibited by cysteine protease inhibitors ICP1 and ICP2. In terms of biological role, cysteine protease which degrades matrix proteins such as collagen, laminin and fibronectin and thus is involved in the destruction of human tissue. Can abolish adhesion. May play an important role in pathogenicity. The sequence is that of Cysteine proteinase 1 from Entamoeba histolytica (strain ATCC 30459 / HM-1:IMSS / ABRM).